The primary structure comprises 130 residues: Small ribosomal subunit protein bS16 (130 aa).

The interval 82-130 is disordered; that stretch reads VLPKTERNNPKKAVPGKKAQDRAEEKAAKAAEASEAPADEAPAEEAAAE. The segment covering 99–110 has biased composition (basic and acidic residues); that stretch reads KAQDRAEEKAAK. The segment covering 118–130 has biased composition (acidic residues); the sequence is PADEAPAEEAAAE.

Belongs to the bacterial ribosomal protein bS16 family.

The protein is Small ribosomal subunit protein bS16 of Dinoroseobacter shibae (strain DSM 16493 / NCIMB 14021 / DFL 12).